Reading from the N-terminus, the 447-residue chain is GTPase Der (447 aa).

2 EngA-type G domains span residues 3–167 (PVIA…FAER) and 181–354 (TRIA…AAAM). GTP-binding positions include 9-16 (GRPNVGKS), 56-60 (DTGGF), 119-122 (NKAE), 187-194 (GRPNVGKS), 234-238 (DTAGL), and 299-302 (NKWD). Positions 355–439 (VKLPTPKLTR…PLRIEFRTNK (85 aa)) constitute a KH-like domain.

Belongs to the TRAFAC class TrmE-Era-EngA-EngB-Septin-like GTPase superfamily. EngA (Der) GTPase family. Associates with the 50S ribosomal subunit.

GTPase that plays an essential role in the late steps of ribosome biogenesis. In Ralstonia pickettii (strain 12J), this protein is GTPase Der.